The following is a 363-amino-acid chain: Homeobox protein DTH-2 (363 aa).

A DNA-binding region (homeobox) is located at residues 133–192; sequence RRKRRILFSQAQIYELERRFKQQKYLSAPEREHLANLINLTPTQVKIWFQNHRYKCKRSQ. Positions 189-246 are disordered; that stretch reads KRSQKDKEKEQQKEKSYHLKKNIVDDKERSPNKQICNASSSDRSTPEEPVAKAKESGL. Basic and acidic residues predominate over residues 191-219; it reads SQKDKEKEQQKEKSYHLKKNIVDDKERSP. Polar residues predominate over residues 220–231; sequence NKQICNASSSDR. A compositionally biased stretch (basic and acidic residues) spans 232 to 246; that stretch reads STPEEPVAKAKESGL.

The protein belongs to the NK-2 homeobox family. In terms of tissue distribution, intestine and unidentified peripheral parenchymal cells. Slightly higher levels in the cephalic region compared to other body regions.

It is found in the nucleus. This protein might be involved in determination and/or differentiation of nerve cells in the continuous replacement of neurons in the cephalic region. The polypeptide is Homeobox protein DTH-2 (DTH-2) (Girardia tigrina (Planarian)).